A 310-amino-acid chain; its full sequence is MALSRRLRLRLCARLPDFFLLLLFRGCVIEAVNLKSSNRNPVVHEFESVELSCIITDSQTNDPRIEWKKIQDGQTTYVYFDNKIQGDLAGRTDVFGKTSLRIWNVTRSDSAIYRCEVVALNDRKEVDELTIELIVQVKPVAPVCRVPKAVPVGKAATLQCQESEGYPRPYYSWYRNDVPLPTDSRANPRFQNSSFHVNSETGTLVFSAVHKEDSGQYYCIASNDAGAARCEGQDMEVYDLNIAGIIGGVLVVLIVLAVITMGICCAYRRGCFISSKQDGESYKSPGKHEGVNYIRTSEEGDFRHKSSFVI.

The first 31 residues, 1–31 (MALSRRLRLRLCARLPDFFLLLLFRGCVIEA), serve as a signal peptide directing secretion. The Extracellular portion of the chain corresponds to 32 to 241 (VNLKSSNRNP…GQDMEVYDLN (210 aa)). Residues 35-127 (KSSNRNPVVH…VALNDRKEVD (93 aa)) enclose the Ig-like V-type domain. Intrachain disulfides connect C53/C115 and C160/C219. N104 and N192 each carry an N-linked (GlcNAc...) asparagine glycan. The Ig-like C2-type domain occupies 139–236 (PVAPVCRVPK…AARCEGQDME (98 aa)). The helical transmembrane segment at 242–262 (IAGIIGGVLVVLIVLAVITMG) threads the bilayer. Over 263-310 (ICCAYRRGCFISSKQDGESYKSPGKHEGVNYIRTSEEGDFRHKSSFVI) the chain is Cytoplasmic. 2 S-palmitoyl cysteine lipidation sites follow: C264 and C265.

The protein belongs to the immunoglobulin superfamily. Interacts with ITGAM. Interacts with GORASP2. Post-translationally, proteolytically cleaved from endothelial cells surface into a soluble form by ADAM10 and ADAM17; the release of soluble JAM3 is increased by pro-inflammatory factors. S-palmitoylated by ZDHHC7. S-palmitoylation promotes expression at tight junctions.

Its subcellular location is the cell membrane. It is found in the cell junction. The protein localises to the desmosome. It localises to the tight junction. The protein resides in the secreted. In terms of biological role, junctional adhesion protein that mediates heterotypic cell-cell interactions with its cognate receptor JAM2 to regulate different cellular processes. Plays a role in homing and mobilization of hematopoietic stem and progenitor cells within the bone marrow. At the surface of bone marrow stromal cells, it contributes to the retention of the hematopoietic stem and progenitor cells expressing JAM3. Plays a central role in leukocytes extravasation by facilitating transmigration through the endothelium. Plays a role in spermatogenesis where JAM2 and JAM3, which are respectively expressed by Sertoli and germ cells, mediate an interaction between both cell types and play an essential role in the anchorage of germ cells onto Sertoli cells and the assembly of cell polarity complexes during spermatid differentiation. Also functions as a counter-receptor for ITGAM, mediating leukocyte-platelet interactions and is involved in the regulation of transepithelial migration of polymorphonuclear neutrophils (PMN). Plays a role in angiogenesis. Plays a role in the regulation of cell migration. During myogenesis, it is involved in myocyte fusion. Promotes chemotaxis of vascular endothelial cells and stimulates angiogenesis. The chain is Junctional adhesion molecule C (Jam3) from Rattus norvegicus (Rat).